A 159-amino-acid polypeptide reads, in one-letter code: Adult-specific rigid cuticular protein 15.7 (159 aa).

The region spanning 23-89 is the Chitin-binding type R&amp;R domain; it reads LGNYAFNYGI…SIKTNEPGTA (67 aa).

Functionally, component of the rigid cuticle of the spider. This Araneus diadematus (European garden spider) protein is Adult-specific rigid cuticular protein 15.7.